A 486-amino-acid chain; its full sequence is V-type proton ATPase subunit B1 (486 aa).

Gly-2 is subject to N-acetylglycine.

Belongs to the ATPase alpha/beta chains family. V-ATPase is a heteromultimeric enzyme composed of a peripheral catalytic V1 complex (components A to H) attached to an integral membrane V0 proton pore complex (components: a, c, c'', d and e).

It localises to the vacuole membrane. Functionally, non-catalytic subunit of the peripheral V1 complex of vacuolar ATPase. V-ATPase is responsible for acidifying a variety of intracellular compartments in eukaryotic cells. In Arabidopsis thaliana (Mouse-ear cress), this protein is V-type proton ATPase subunit B1 (VHA-B1).